We begin with the raw amino-acid sequence, 125 residues long: MARIAGVNIPNHQHAEIALTAIYGIGRARAREICEAAGINVSTKMKDVTDAEMDKLRDNVAKFVVEGDLRREVSMNIKRLMDLGCYRGLRHRRGLPVRGQRTRTNARTRKGPRKAVRASSAKAGR.

Basic residues predominate over residues 94–116 (GLPVRGQRTRTNARTRKGPRKAV). Residues 94-125 (GLPVRGQRTRTNARTRKGPRKAVRASSAKAGR) form a disordered region.

The protein belongs to the universal ribosomal protein uS13 family. In terms of assembly, part of the 30S ribosomal subunit. Forms a loose heterodimer with protein S19. Forms two bridges to the 50S subunit in the 70S ribosome.

Functionally, located at the top of the head of the 30S subunit, it contacts several helices of the 16S rRNA. In the 70S ribosome it contacts the 23S rRNA (bridge B1a) and protein L5 of the 50S subunit (bridge B1b), connecting the 2 subunits; these bridges are implicated in subunit movement. Contacts the tRNAs in the A and P-sites. The sequence is that of Small ribosomal subunit protein uS13 from Nitrosospira multiformis (strain ATCC 25196 / NCIMB 11849 / C 71).